The chain runs to 318 residues: NADH-ubiquinone oxidoreductase chain 1 (318 aa).

The next 8 membrane-spanning stretches (helical) occupy residues 3 to 23 (LINV…LTLL), 69 to 89 (LMFT…WIPI), 100 to 120 (LGVL…LWSG), 135 to 155 (AVAQ…SIMM), 171 to 191 (HMWL…STLA), 223 to 243 (FFLA…ILFF), 253 to 273 (ELHT…FLWV), and 293 to 313 (FLPL…TFAG).

Belongs to the complex I subunit 1 family.

It localises to the mitochondrion inner membrane. The enzyme catalyses a ubiquinone + NADH + 5 H(+)(in) = a ubiquinol + NAD(+) + 4 H(+)(out). Its function is as follows. Core subunit of the mitochondrial membrane respiratory chain NADH dehydrogenase (Complex I) that is believed to belong to the minimal assembly required for catalysis. Complex I functions in the transfer of electrons from NADH to the respiratory chain. The immediate electron acceptor for the enzyme is believed to be ubiquinone. The protein is NADH-ubiquinone oxidoreductase chain 1 (MT-ND1) of Dasypus novemcinctus (Nine-banded armadillo).